A 1403-amino-acid polypeptide reads, in one-letter code: Eukaryotic translation initiation factor 4 gamma (1403 aa).

Polar residues-rich tracts occupy residues 1–11 (MSSKPPSNTPK), 19–39 (ASSQ…TATA), and 50–60 (EPTNTSRANAQ). Disordered stretches follow at residues 1–381 (MSSK…GSTP), 439–464 (SRSG…RNGF), 488–774 (VVVP…KRDL), and 861–1003 (AFSD…EALL). Serine 83 carries the post-translational modification Phosphoserine. A compositionally biased stretch (polar residues) spans 109–137 (DNTSKPSANSSAERTSSQHQKPETSSQIG). 2 stretches are compositionally biased toward low complexity: residues 190 to 208 (SGVS…SVTS) and 231 to 248 (PRPT…ANGA). The span at 249-269 (PTNKPSTDINTTDPATQTTQV) shows a compositional bias: polar residues. Over residues 270–291 (SASNSPALSGSSTPSNTSSRSN) the composition is skewed to low complexity. Over residues 298-308 (FSEKRHYDRYG) the composition is skewed to basic and acidic residues. The segment covering 325-334 (NYNNSGNNRN) has biased composition (low complexity). 3 stretches are compositionally biased toward polar residues: residues 346–381 (RNYN…GSTP), 439–460 (SRSG…TLSP), and 493–508 (KNAS…SRAE). Phosphoserine occurs at positions 452, 455, 456, and 459. Residues 537–714 (IQEKAEAEAK…GKREADKNPE (178 aa)) are compositionally biased toward basic and acidic residues. Positions 720-737 (PLASSEANVDTSKQTNAT) are enriched in polar residues. Residues 741–754 (VVDKTKVEKLKASE) show a composition bias toward basic and acidic residues. Over residues 757 to 768 (STSSLSSPSHST) the composition is skewed to low complexity. A phosphoserine mark is found at serine 866 and serine 882. Low complexity predominate over residues 868 to 886 (RGMYSSSRQSSRSGSNTHS). Threonine 884 carries the phosphothreonine modification. Phosphoserine is present on residues serine 886, serine 911, serine 919, and serine 921. Position 923 is a phosphotyrosine (tyrosine 923). Positions 986–995 (KLTEKPAETK) are enriched in basic and acidic residues. Residues 1009-1245 (QRKVKGSLNK…MDVMDSRKNG (237 aa)) enclose the MIF4G domain. Positions 1266 to 1403 (AERKKALAES…QKDSNSKTSS (138 aa)) are disordered. Residues 1284 to 1295 (HGRDMNRGDSRM) show a composition bias toward basic and acidic residues. Composition is skewed to polar residues over residues 1302 to 1313 (PPFSSSDWSNNK), 1328 to 1341 (SGTQ…SLSS), and 1348 to 1358 (VSRTPSRQNSA). Serine 1333 bears the Phosphoserine mark. Residues 1383 to 1403 (LEEHDHDNDGGQKDSNSKTSS) are compositionally biased toward basic and acidic residues.

Belongs to the eukaryotic initiation factor 4G family.

The protein resides in the cytoplasm. Its subcellular location is the perinuclear region. Component of the protein complex eIF4F, which is involved in the recognition of the mRNA cap, ATP-dependent unwinding of 5'-terminal secondary structure and recruitment of mRNA to the ribosome. The chain is Eukaryotic translation initiation factor 4 gamma (tif471) from Schizosaccharomyces pombe (strain 972 / ATCC 24843) (Fission yeast).